Here is a 785-residue protein sequence, read N- to C-terminus: Peptide transporter family 2 (785 aa).

Helical transmembrane passes span 46-66 (FSFY…LNFS), 72-92 (VLFH…SILA), 99-119 (FWTI…LAFS), 134-154 (LLGL…VSAF), 167-187 (ISLF…ISMW), 208-228 (FGIP…GSFW), 303-323 (VIVM…QGST), 345-365 (MGVL…SIVY), and 382-402 (AGGG…QLFV). Asparagine 467 is a glycosylation site (N-linked (GlcNAc...) asparagine). 3 helical membrane-spanning segments follow: residues 670 to 690 (ILWQ…FSIT), 711 to 731 (WLFT…LNIF), and 738 to 758 (MFVF…LAVF).

The protein belongs to the major facilitator superfamily. Proton-dependent oligopeptide transporter (POT/PTR) (TC 2.A.17) family. Expressed in vulval, pharyngeal and anal muscles.

The protein resides in the membrane. In terms of biological role, proton-dependent uptake of di- or tripeptides, and to a minor extent tetrapeptides. Transport is independent of sodium and chloride ions. Protein shows high affinity to peptide substrates. In Caenorhabditis elegans, this protein is Peptide transporter family 2 (pept-2).